Here is a 311-residue protein sequence, read N- to C-terminus: Mycinamicin-resistance protein MyrB (311 aa).

S-adenosyl-L-methionine-binding residues include asparagine 27, leucine 29, glycine 54, glutamate 75, and aspartate 98. The interval 272 to 311 (PAPAGRSVRARPGSVGPDRSLPPRGLRSGPPRARRRGGGA) is disordered. Residues 293-302 (PPRGLRSGPP) are compositionally biased toward low complexity.

The protein belongs to the class I-like SAM-binding methyltransferase superfamily. rRNA adenine N(6)-methyltransferase family.

Functionally, confers resistance to macrolide, lincosamide and streptogramin B antibiotics. This chain is Mycinamicin-resistance protein MyrB (myrB), found in Micromonospora griseorubida.